The following is a 145-amino-acid chain: D-aminoacyl-tRNA deacylase (145 aa).

Residues 137–138 (GP) carry the Gly-cisPro motif, important for rejection of L-amino acids motif.

Belongs to the DTD family. As to quaternary structure, homodimer.

The protein localises to the cytoplasm. It carries out the reaction glycyl-tRNA(Ala) + H2O = tRNA(Ala) + glycine + H(+). The catalysed reaction is a D-aminoacyl-tRNA + H2O = a tRNA + a D-alpha-amino acid + H(+). Functionally, an aminoacyl-tRNA editing enzyme that deacylates mischarged D-aminoacyl-tRNAs. Also deacylates mischarged glycyl-tRNA(Ala), protecting cells against glycine mischarging by AlaRS. Acts via tRNA-based rather than protein-based catalysis; rejects L-amino acids rather than detecting D-amino acids in the active site. By recycling D-aminoacyl-tRNA to D-amino acids and free tRNA molecules, this enzyme counteracts the toxicity associated with the formation of D-aminoacyl-tRNA entities in vivo and helps enforce protein L-homochirality. The polypeptide is D-aminoacyl-tRNA deacylase (Cronobacter sakazakii (strain ATCC BAA-894) (Enterobacter sakazakii)).